The following is a 221-amino-acid chain: Thymine/uracil-DNA glycosylase (221 aa).

The region spanning 105-133 is the HhH domain; that stretch reads DYGGRVPRNRKAILDLPGVGKYTCAAVMC. The [4Fe-4S] cluster site is built by Cys197, Cys204, Cys207, and Cys213.

It belongs to the Nth/MutY family. Requires [4Fe-4S] cluster as cofactor.

The catalysed reaction is Hydrolyzes mismatched double-stranded DNA and polynucleotides, releasing free thymine.. Functionally, DNA glycosylase that excises thymine from T/G mismatches and uracil from U/G mismatches. Acts as a repair enzyme able to counteract the mutagenic effect of spontaneous hydrolytic deamination of DNA 5-methylcytosine (5-meC) residues that leads to the formation of T/G mismatches. May also repair U/G mismatches arising from hydrolytic deamination of DNA cytosine residues. G/G, A/G, T/C and U/C are minor substrates. The chain is Thymine/uracil-DNA glycosylase from Methanothermobacter thermautotrophicus (Methanobacterium thermoformicicum).